Reading from the N-terminus, the 59-residue chain is UPF0434 protein Shewmr7_2490 (59 aa).

The protein belongs to the UPF0434 family.

This chain is UPF0434 protein Shewmr7_2490, found in Shewanella sp. (strain MR-7).